The following is a 65-amino-acid chain: Urease accessory protein UreI (65 aa).

Probably facilitates nickel incorporation. May constitute a multicomponent high-affinity nickel transporter. Not essential for the expression of catalytically active urease. The polypeptide is Urease accessory protein UreI (ureI) (Bacillus sp. (strain TB-90)).